Here is a 182-residue protein sequence, read N- to C-terminus: Large ribosomal subunit protein uL10 (182 aa).

It belongs to the universal ribosomal protein uL10 family. In terms of assembly, part of the ribosomal stalk of the 50S ribosomal subunit. The N-terminus interacts with L11 and the large rRNA to form the base of the stalk. The C-terminus forms an elongated spine to which L12 dimers bind in a sequential fashion forming a multimeric L10(L12)X complex.

Its function is as follows. Forms part of the ribosomal stalk, playing a central role in the interaction of the ribosome with GTP-bound translation factors. The protein is Large ribosomal subunit protein uL10 of Gluconacetobacter diazotrophicus (strain ATCC 49037 / DSM 5601 / CCUG 37298 / CIP 103539 / LMG 7603 / PAl5).